A 701-amino-acid chain; its full sequence is Ribosomal RNA large subunit methyltransferase K/L (701 aa).

The THUMP domain maps to 44 to 155; it reads QAYKICLWSR…SDKLTVYLDL (112 aa).

It belongs to the methyltransferase superfamily. RlmKL family.

It localises to the cytoplasm. It catalyses the reaction guanosine(2445) in 23S rRNA + S-adenosyl-L-methionine = N(2)-methylguanosine(2445) in 23S rRNA + S-adenosyl-L-homocysteine + H(+). The enzyme catalyses guanosine(2069) in 23S rRNA + S-adenosyl-L-methionine = N(2)-methylguanosine(2069) in 23S rRNA + S-adenosyl-L-homocysteine + H(+). Its function is as follows. Specifically methylates the guanine in position 2445 (m2G2445) and the guanine in position 2069 (m7G2069) of 23S rRNA. This Pseudoalteromonas atlantica (strain T6c / ATCC BAA-1087) protein is Ribosomal RNA large subunit methyltransferase K/L.